A 575-amino-acid chain; its full sequence is Preprotein translocase subunit SCY2, chloroplastic (575 aa).

The transit peptide at 1-34 (MNSSQACFFHFSLRPISLSHPSYAFLSKRDPFLC) directs the protein to the chloroplast. 10 helical membrane passes run 157–177 (FVTA…LPGF), 206–226 (LSLF…MQVL), 251–271 (IWWL…YTSL), 285–305 (VMMT…LCDT), 306–326 (ISES…ILTG), 346–366 (LPYL…AVVV), 414–434 (TTYL…PFLL), 447–467 (GAPP…FNIF), 509–529 (FWGG…DHYL), and 531–551 (SINQ…GSII).

This sequence belongs to the SecY/SEC61-alpha family. In terms of assembly, part of a second Sec protein translocation apparatus. Interacts probably with SECA2. In terms of tissue distribution, ubiquitous.

It is found in the plastid. Its subcellular location is the chloroplast membrane. It localises to the amyloplast membrane. The protein localises to the chloroplast thylakoid membrane. Functionally, involved in protein export. Probably interacts with other proteins to allow the postimport or conservative sorting pathway for inner membrane proteins in plastids. Central subunit of the protein translocation channel SecYE. Consists of two halves formed by TMs 1-5 and 6-10. These two domains form a lateral gate at the front which open onto the bilayer between TMs 2 and 7, and are clamped together by SecE at the back. The channel is closed by both a pore ring composed of hydrophobic SecY resides and a short helix (helix 2A) on the extracellular side of the membrane which forms a plug. The chain is Preprotein translocase subunit SCY2, chloroplastic (SCY2) from Arabidopsis thaliana (Mouse-ear cress).